The chain runs to 184 residues: Elongation factor P (184 aa).

The protein belongs to the elongation factor P family.

The protein resides in the cytoplasm. It participates in protein biosynthesis; polypeptide chain elongation. Involved in peptide bond synthesis. Stimulates efficient translation and peptide-bond synthesis on native or reconstituted 70S ribosomes in vitro. Probably functions indirectly by altering the affinity of the ribosome for aminoacyl-tRNA, thus increasing their reactivity as acceptors for peptidyl transferase. The protein is Elongation factor P of Polaromonas sp. (strain JS666 / ATCC BAA-500).